The sequence spans 877 residues: Alanine--tRNA ligase (877 aa).

Residues H562, H566, C664, and H668 each contribute to the Zn(2+) site.

This sequence belongs to the class-II aminoacyl-tRNA synthetase family. It depends on Zn(2+) as a cofactor.

The protein localises to the cytoplasm. It catalyses the reaction tRNA(Ala) + L-alanine + ATP = L-alanyl-tRNA(Ala) + AMP + diphosphate. Catalyzes the attachment of alanine to tRNA(Ala) in a two-step reaction: alanine is first activated by ATP to form Ala-AMP and then transferred to the acceptor end of tRNA(Ala). Also edits incorrectly charged Ser-tRNA(Ala) and Gly-tRNA(Ala) via its editing domain. The polypeptide is Alanine--tRNA ligase (Picosynechococcus sp. (strain ATCC 27264 / PCC 7002 / PR-6) (Agmenellum quadruplicatum)).